Consider the following 109-residue polypeptide: Tyrosine-protein phosphatase 4 (109 aa).

The region spanning 1 to 109 is the Tyrosine-protein phosphatase domain; that stretch reads SKSASIVMLT…QNSGNHPIVI (109 aa). Substrate is bound at residue E78.

The protein belongs to the protein-tyrosine phosphatase family.

The catalysed reaction is O-phospho-L-tyrosyl-[protein] + H2O = L-tyrosyl-[protein] + phosphate. The polypeptide is Tyrosine-protein phosphatase 4 (STY-4) (Styela plicata (Wrinkled sea squirt)).